Here is a 103-residue protein sequence, read N- to C-terminus: c-Myc-binding protein (103 aa).

Belongs to the AMY1 family. In terms of assembly, binds via its C-terminal region to the N-terminal region of MYC. Associates with AKAP1/S-AKAP84. Interacts with MYCBPAP. Interacts with CFAP91. In terms of tissue distribution, highly expressed in heart, placenta, pancreas, skeletal muscle and kidney. Also present at low levels in lung.

Its subcellular location is the cytoplasm. The protein resides in the nucleus. It localises to the mitochondrion. Its function is as follows. May control the transcriptional activity of MYC. Stimulates the activation of E box-dependent transcription by MYC. The polypeptide is c-Myc-binding protein (Homo sapiens (Human)).